A 511-amino-acid chain; its full sequence is Glycerol kinase (511 aa).

An ADP-binding site is contributed by Thr-11. ATP-binding residues include Thr-11, Ser-12, and Ser-13. A sn-glycerol 3-phosphate-binding site is contributed by Thr-11. Arg-15 is a binding site for ADP. Residues Arg-81, Glu-82, Tyr-133, and Asp-242 each coordinate sn-glycerol 3-phosphate. Arg-81, Glu-82, Tyr-133, Asp-242, and Gln-243 together coordinate glycerol. The ADP site is built by Thr-264 and Gly-321. Thr-264, Gly-321, Gln-325, and Gly-426 together coordinate ATP. The ADP site is built by Gly-426 and Asn-430.

It belongs to the FGGY kinase family.

It carries out the reaction glycerol + ATP = sn-glycerol 3-phosphate + ADP + H(+). It functions in the pathway polyol metabolism; glycerol degradation via glycerol kinase pathway; sn-glycerol 3-phosphate from glycerol: step 1/1. Inhibited by fructose 1,6-bisphosphate (FBP). Its function is as follows. Key enzyme in the regulation of glycerol uptake and metabolism. Catalyzes the phosphorylation of glycerol to yield sn-glycerol 3-phosphate. In Verminephrobacter eiseniae (strain EF01-2), this protein is Glycerol kinase.